The primary structure comprises 196 residues: Dephospho-CoA kinase (196 aa).

The DPCK domain maps to 3–196; sequence RIGLTGNIGC…KVYEELTRDP (194 aa). 11–16 contributes to the ATP binding site; that stretch reads GCGKST.

This sequence belongs to the CoaE family.

The protein localises to the cytoplasm. The enzyme catalyses 3'-dephospho-CoA + ATP = ADP + CoA + H(+). The protein operates within cofactor biosynthesis; coenzyme A biosynthesis; CoA from (R)-pantothenate: step 5/5. Functionally, catalyzes the phosphorylation of the 3'-hydroxyl group of dephosphocoenzyme A to form coenzyme A. This Aquifex aeolicus (strain VF5) protein is Dephospho-CoA kinase.